The primary structure comprises 146 residues: Phospholipase A2 147 (146 aa).

An N-terminal signal peptide occupies residues 1–19 (MYPAHLLVLLAVCVSLLGA). Residues 20 to 27 (ASVPPQPL) constitute a propeptide that is removed on maturation. Cystine bridges form between cysteine 38-cysteine 98, cysteine 54-cysteine 145, cysteine 56-cysteine 72, cysteine 71-cysteine 126, cysteine 78-cysteine 119, cysteine 87-cysteine 112, and cysteine 105-cysteine 117. Ca(2+) is bound by residues tyrosine 55, glycine 57, and glycine 59. Histidine 75 is a catalytic residue. Aspartate 76 is a binding site for Ca(2+). The active site involves aspartate 120.

It belongs to the phospholipase A2 family. Group I subfamily. D49 sub-subfamily. Ca(2+) serves as cofactor. As to expression, expressed by the venom gland.

The protein localises to the secreted. It carries out the reaction a 1,2-diacyl-sn-glycero-3-phosphocholine + H2O = a 1-acyl-sn-glycero-3-phosphocholine + a fatty acid + H(+). Snake venom phospholipase A2 (PLA2) that inhibits collagen-induced platelet aggregation. PLA2 catalyzes the calcium-dependent hydrolysis of the 2-acyl groups in 3-sn-phosphoglycerides. The protein is Phospholipase A2 147 of Drysdalia coronoides (White-lipped snake).